A 283-amino-acid chain; its full sequence is BTB/POZ domain-containing protein KCTD15 (283 aa).

The disordered stretch occupies residues 1-32 (MPHRKERPSGSSLHTHGSTGTAEGGNMSRLSL). Low complexity predominate over residues 9 to 21 (SGSSLHTHGSTGT). 3 positions are modified to phosphoserine: serine 31, serine 35, and serine 38. The BTB domain maps to 56-126 (APVHIDVGGH…LRTSKLLLPD (71 aa)).

Forms oligomers, predominantly homopentamers. Interacts with KCTD1, probably forming heteropentamers depending on its abundance in a cell-type dependent manner. Interacts with TFAP2A; this interaction inhibits TFAP2A transcriptional activation.

Its subcellular location is the nucleus. During embryonic development, it is involved in neural crest formation. Inhibits AP2 transcriptional activity by interaction with its activation domain. This Homo sapiens (Human) protein is BTB/POZ domain-containing protein KCTD15 (KCTD15).